The chain runs to 575 residues: Flagellin B (575 aa).

The protein belongs to the bacterial flagellin family. In terms of assembly, heteromer of flaA and flaB.

It localises to the secreted. The protein localises to the bacterial flagellum. Its function is as follows. Flagellin is the subunit protein which polymerizes to form the filaments of bacterial flagella. This Campylobacter jejuni protein is Flagellin B (flaB).